The sequence spans 180 residues: Insulin-like growth factor 2 (180 aa).

The N-terminal stretch at 1–24 (MGIPMGKSMLVLLTFLAFASCCIA) is a signal peptide. Positions 25–52 (AYRPSETLCGGELVDTLQFVCGDRGFYF) are b. Disulfide bonds link cysteine 33/cysteine 71, cysteine 45/cysteine 84, and cysteine 70/cysteine 75. Residues 53–64 (SRPASRVSRRSR) are c. Positions 65–85 (GIVEECCFRSCDLALLETYCA) are a. Residues 86–91 (TPAKSE) form a d region. Residues 92 to 180 (RDVSTPPTVL…APPEMASNRK (89 aa)) constitute a propeptide, e peptide. O-linked (GalNAc...) threonine glycosylation is found at threonine 96, threonine 99, and threonine 163. The disordered stretch occupies residues 161–180 (LPTQDPAHGGAPPEMASNRK).

This sequence belongs to the insulin family. Interacts with MYORG; this interaction is required for IGF2 secretion. Interacts with integrins ITGAV:ITGB3 and ITGA6:ITGB4; integrin-binding is required for IGF2 signaling. Interacts with IGFBP2. Post-translationally, O-glycosylated with core 1 or possibly core 8 glycans. Thr-96 is a minor glycosylation site compared to Thr-99. Proteolytically processed by PCSK4, proIGF2 is cleaved at Arg-128 and Arg-92 to generate big-IGF2 and mature IGF2. Expressed in heart, placenta, lung, liver, muscle, kidney, tongue, limb, eye and pancreas.

Its subcellular location is the secreted. Functionally, the insulin-like growth factors possess growth-promoting activity. Major fetal growth hormone in mammals. Plays a key role in regulating fetoplacental development. IGF2 is influenced by placental lactogen. Also involved in tissue differentiation. In adults, involved in glucose metabolism in adipose tissue, skeletal muscle and liver. Acts as a ligand for integrin which is required for IGF2 signaling. Positively regulates myogenic transcription factor MYOD1 function by facilitating the recruitment of transcriptional coactivators, thereby controlling muscle terminal differentiation. Inhibits myoblast differentiation and modulates metabolism via increasing the mitochondrial respiration rate. Preptin undergoes glucose-mediated co-secretion with insulin, and acts as a physiological amplifier of glucose-mediated insulin secretion. Exhibits osteogenic properties by increasing osteoblast mitogenic activity through phosphoactivation of MAPK1 and MAPK3. The sequence is that of Insulin-like growth factor 2 from Homo sapiens (Human).